Reading from the N-terminus, the 399-residue chain is Chorismate synthase (399 aa).

NADP(+) contacts are provided by Arg40 and Arg46. Residues 134 to 136 (RAS), 255 to 256 (QA), Gly299, 314 to 318 (KPIST), and Arg340 contribute to the FMN site.

Belongs to the chorismate synthase family. Homotetramer. It depends on FMNH2 as a cofactor.

It catalyses the reaction 5-O-(1-carboxyvinyl)-3-phosphoshikimate = chorismate + phosphate. Its pathway is metabolic intermediate biosynthesis; chorismate biosynthesis; chorismate from D-erythrose 4-phosphate and phosphoenolpyruvate: step 7/7. Catalyzes the anti-1,4-elimination of the C-3 phosphate and the C-6 proR hydrogen from 5-enolpyruvylshikimate-3-phosphate (EPSP) to yield chorismate, which is the branch point compound that serves as the starting substrate for the three terminal pathways of aromatic amino acid biosynthesis. This reaction introduces a second double bond into the aromatic ring system. This Mycolicibacterium smegmatis (strain ATCC 700084 / mc(2)155) (Mycobacterium smegmatis) protein is Chorismate synthase.